A 130-amino-acid polypeptide reads, in one-letter code: MSQVPEDLKYTRNHEWVRVEADGSVTVGITEHAQESLGDLVFVEPPEAGTQVQAEEACAVVESVKAASDVYAPISGEVTQGNEALADNPEAVNTDPYGDGWIMRIQPADTSEIDGLLDAAAYQELVADEG.

The Lipoyl-binding domain occupies 24–106; sequence SVTVGITEHA…YGDGWIMRIQ (83 aa). At Lys65 the chain carries N6-lipoyllysine.

Belongs to the GcvH family. In terms of assembly, the glycine cleavage system is composed of four proteins: P, T, L and H. It depends on (R)-lipoate as a cofactor.

Its function is as follows. The glycine cleavage system catalyzes the degradation of glycine. The H protein shuttles the methylamine group of glycine from the P protein to the T protein. In Halorhodospira halophila (strain DSM 244 / SL1) (Ectothiorhodospira halophila (strain DSM 244 / SL1)), this protein is Glycine cleavage system H protein.